Reading from the N-terminus, the 434-residue chain is Enolase (434 aa).

Position 167 (Gln167) interacts with (2R)-2-phosphoglycerate. Glu209 acts as the Proton donor in catalysis. Residues Asp246, Glu291, and Asp318 each coordinate Mg(2+). Lys343, Arg372, Ser373, and Lys394 together coordinate (2R)-2-phosphoglycerate. Lys343 serves as the catalytic Proton acceptor.

This sequence belongs to the enolase family. In terms of assembly, component of the RNA degradosome, a multiprotein complex involved in RNA processing and mRNA degradation. It depends on Mg(2+) as a cofactor.

The protein resides in the cytoplasm. It localises to the secreted. Its subcellular location is the cell surface. The catalysed reaction is (2R)-2-phosphoglycerate = phosphoenolpyruvate + H2O. It functions in the pathway carbohydrate degradation; glycolysis; pyruvate from D-glyceraldehyde 3-phosphate: step 4/5. In terms of biological role, catalyzes the reversible conversion of 2-phosphoglycerate (2-PG) into phosphoenolpyruvate (PEP). It is essential for the degradation of carbohydrates via glycolysis. The chain is Enolase from Buchnera aphidicola subsp. Schizaphis graminum (strain Sg).